Consider the following 998-residue polypeptide: Mis18-binding protein 1 (998 aa).

Residue Lys-7 forms a Glycyl lysine isopeptide (Lys-Gly) (interchain with G-Cter in SUMO2) linkage. A phosphoserine mark is found at Ser-9, Ser-109, and Ser-134. Residues Gln-122–Lys-153 form a disordered region. The segment covering Glu-142–Lys-153 has biased composition (basic and acidic residues). Phosphoserine occurs at positions 169 and 258. The SANTA domain maps to Val-336–Glu-422. Disordered stretches follow at residues Lys-438 to Lys-460 and Asp-476 to Arg-502. Residues Pro-488–Ser-497 are compositionally biased toward polar residues. Phosphothreonine occurs at positions 516 and 578. 2 positions are modified to phosphoserine: Ser-638 and Ser-639. The tract at residues Ser-638–Asn-660 is disordered. The span at Val-644 to Asn-660 shows a compositional bias: basic and acidic residues. Phosphothreonine is present on Thr-688. Lys-707 participates in a covalent cross-link: Glycyl lysine isopeptide (Lys-Gly) (interchain with G-Cter in SUMO2). Residue Ser-726 is modified to Phosphoserine. Residues Thr-741–Gly-796 form the SANT domain. Lys-765 participates in a covalent cross-link: Glycyl lysine isopeptide (Lys-Gly) (interchain with G-Cter in SUMO2). The tract at residues Cys-784–Lys-821 is disordered. Residues Ser-797–Ala-807 show a composition bias toward basic residues. The segment covering Asn-812 to Lys-821 has biased composition (basic and acidic residues). Glycyl lysine isopeptide (Lys-Gly) (interchain with G-Cter in SUMO2) cross-links involve residues Lys-821, Lys-828, and Lys-847. Position 872 is a phosphoserine (Ser-872). A Glycyl lysine isopeptide (Lys-Gly) (interchain with G-Cter in SUMO2) cross-link involves residue Lys-948. Phosphoserine occurs at positions 955 and 985. The interval Ser-976–Asp-998 is disordered. Residues Asp-981–Lys-990 show a composition bias toward acidic residues.

In terms of assembly, interacts with SP1. Interacts with MIS18A. Identified in a complex containing MIS18A, OIP5/MIS18B, MIS18BP1, RBBP7 and RBBP4. Interacts with KAT7/HBO1. Interacts (via N-terminus) with FLNA (via N-terminus).

The protein localises to the nucleus. It localises to the chromosome. The protein resides in the centromere. Its function is as follows. Required for recruitment of CENPA to centromeres and normal chromosome segregation during mitosis. This Mus musculus (Mouse) protein is Mis18-binding protein 1 (Mis18bp1).